A 344-amino-acid chain; its full sequence is Ferrochelatase (344 aa).

Positions 214 and 295 each coordinate Fe cation.

This sequence belongs to the ferrochelatase family.

It is found in the cytoplasm. The catalysed reaction is heme b + 2 H(+) = protoporphyrin IX + Fe(2+). Its pathway is porphyrin-containing compound metabolism; protoheme biosynthesis; protoheme from protoporphyrin-IX: step 1/1. Functionally, catalyzes the ferrous insertion into protoporphyrin IX. This chain is Ferrochelatase, found in Rhizobium etli (strain CIAT 652).